A 195-amino-acid chain; its full sequence is Rubrerythrin (195 aa).

Positions 1 to 150 (MKSLKGTKTA…KLAKNIEEGK (150 aa)) constitute a Ferritin-like diiron domain. Fe(3+) contacts are provided by Glu20, Glu53, Glu98, Glu101, Glu132, His135, Cys162, Cys165, Cys178, and Cys181. The region spanning 157 to 195 (VVLWKCGNCGFIWEGAEAPLKCPACLHPQAYFEVFKETY) is the Rubredoxin-like domain.

Homodimer. Possesses two rubredoxin-like centers and two non-sulfur oxo-bridged di-iron centers per dimer. The cofactor is Fe(3+).

It localises to the cytoplasm. In terms of biological role, may provide oxidative stress protection via catalytic reduction of intracellular hydrogen peroxide. The protein is Rubrerythrin (rbr) of Clostridium perfringens (strain 13 / Type A).